The following is a 408-amino-acid chain: L-lactate oxidase (408 aa).

Residues 14-370 (NEAIKMVNVD…KHADIRQINY (357 aa)) enclose the FMN hydroxy acid dehydrogenase domain. Tyr40 serves as a coordination point for pyruvate. FMN contacts are provided by residues 93–95 (PIA), Ser122, and Gln144. Tyr146 provides a ligand contact to pyruvate. Thr172 contacts FMN. A pyruvate-binding site is contributed by Arg181. FMN is bound by residues Lys241 and Ser263. Residues His265 and Arg268 each coordinate pyruvate. Catalysis depends on His265, which acts as the Proton acceptor. Residues 296–300 (DSGVR) and Arg320 contribute to the FMN site.

This sequence belongs to the FMN-dependent alpha-hydroxy acid dehydrogenase family. As to quaternary structure, homotetramer. It depends on FMN as a cofactor.

It carries out the reaction a (2S)-2-hydroxycarboxylate + O2 = a 2-oxocarboxylate + H2O2. The catalysed reaction is (S)-lactate + O2 = pyruvate + H2O2. The enzyme catalyses 2-hydroxyoctanoate + O2 = 2-oxooctanoate + H2O2. It catalyses the reaction glycolate + O2 = glyoxylate + H2O2. It carries out the reaction mandelate + O2 = phenylglyoxylate + H2O2. The catalysed reaction is 2-hydroxyoctadecanoate + O2 = 2-oxooctadecanoate + H2O2. Its function is as follows. Oxidase that catalyzes the oxidation of a broad range of 2-hydroxyacids in vitro, such as (S)-lactate, 2-hydroxyoctanoate, and to a lesser extent glycolate, mandelate and 2-hydroxyoctadecanoate, to the corresponding 2-oxoacids, with a reduction of O2 to H2O2. May be involved in the utilization of L-lactate as an energy source for growth. This chain is L-lactate oxidase, found in Lactobacillus jensenii.